Here is a 74-residue protein sequence, read N- to C-terminus: RNA-binding protein Hfq (74 aa).

Residues 9 to 69 (DQFLNQLRKE…ISTFVPQKNV (61 aa)) enclose the Sm domain.

The protein belongs to the Hfq family. As to quaternary structure, homohexamer.

In terms of biological role, RNA chaperone that binds small regulatory RNA (sRNAs) and mRNAs to facilitate mRNA translational regulation in response to envelope stress, environmental stress and changes in metabolite concentrations. Also binds with high specificity to tRNAs. This Bacillus cereus (strain Q1) protein is RNA-binding protein Hfq.